The following is a 486-amino-acid chain: Membrane-bound lytic murein transglycosylase F (486 aa).

Positions 1 to 21 are cleaved as a signal peptide; that stretch reads MTRIKLSYFTIGLVALLLALA. The segment at 22 to 268 is non-LT domain; that stretch reads LWPNIPWRNG…RLEEKYLGHV (247 aa). The interval 269–486 is LT domain; sequence GSFDYVDTKT…VVGPGWSIGD (218 aa). The active site involves Glu313.

In the N-terminal section; belongs to the bacterial solute-binding protein 3 family. This sequence in the C-terminal section; belongs to the transglycosylase Slt family.

It localises to the cell outer membrane. It catalyses the reaction Exolytic cleavage of the (1-&gt;4)-beta-glycosidic linkage between N-acetylmuramic acid (MurNAc) and N-acetylglucosamine (GlcNAc) residues in peptidoglycan, from either the reducing or the non-reducing ends of the peptidoglycan chains, with concomitant formation of a 1,6-anhydrobond in the MurNAc residue.. In terms of biological role, murein-degrading enzyme that degrades murein glycan strands and insoluble, high-molecular weight murein sacculi, with the concomitant formation of a 1,6-anhydromuramoyl product. Lytic transglycosylases (LTs) play an integral role in the metabolism of the peptidoglycan (PG) sacculus. Their lytic action creates space within the PG sacculus to allow for its expansion as well as for the insertion of various structures such as secretion systems and flagella. This is Membrane-bound lytic murein transglycosylase F from Yersinia pestis bv. Antiqua (strain Antiqua).